Here is a 455-residue protein sequence, read N- to C-terminus: MEQSNNDDNLLVLGIGISVHKTDGVLRFEKYCQAHNLQYMIVGEGKKWNGGNLESEAGGGQKINELLIALESIKDNKLIVVCDTYDLIPLSGPEEILRKYRFLTPDNKVVFSSELYCWPDASLVERYPKVDTKYKYLNSGAFMGYRDDIYEMIKNGVKDRDDDQLFFSIKFIETDKIVLDYKCELFQAMYRCNSDLVVHKNRIFNGYTNSYPVFAHGNGPAKKLLNHMEGYFMTEPIDGSSNTINTFKLDNEPKVFFALYVDSNDLSALKQFLGKVASIQYGNKVIYLYDRSDNEQNRKLIQISYPNYHTGVTKYVFDDFKKSDAQFYFLLEQNCIITKKDILHELIMQVKDNHRVISPMIGYEQNSTRTNFWGDIEDGYYKRSENYLDLAKHKVRGLWNVPYVYGVILMHESVVRNWDLSMVKYNDKDMDLCFSLRKHTIFMYMINNNNYGYMV.

This is an uncharacterized protein from Acanthamoeba polyphaga (Amoeba).